A 300-amino-acid chain; its full sequence is uncharacterized protein (300 aa).

A signal peptide spans 1–20 (MRLLISCILILSILVNFISG). Topologically, residues 21 to 279 (HAVLVAPTPF…PCSIYGDGNG (259 aa)) are extracellular. N-linked (GlcNAc...) asparagine glycans are attached at residues Asn56, Asn217, and Asn278. Residues 280–300 (SNLIIIPTLLIISILSLILMF) form a helical membrane-spanning segment.

It localises to the membrane. This is an uncharacterized protein from Dictyostelium discoideum (Social amoeba).